The sequence spans 431 residues: Argininosuccinate lyase (431 aa).

It belongs to the lyase 1 family. Argininosuccinate lyase subfamily.

It is found in the cytoplasm. It catalyses the reaction 2-(N(omega)-L-arginino)succinate = fumarate + L-arginine. Its pathway is amino-acid biosynthesis; L-arginine biosynthesis; L-arginine from L-ornithine and carbamoyl phosphate: step 3/3. The protein is Argininosuccinate lyase of Stenotrophomonas maltophilia (strain K279a).